The chain runs to 372 residues: MAAEGDSPARPRVYFDISIGGKSVGRITMELYADLVPKTADNFRSLCTGEKGIGKSGKPLHYKGSVFHRVIKQFMIQGGDFTAGDGTGGESIYGNKFDDEAFPIKHEKPFLLSMANAGPNTNGSQFFITTVPTPHLDGKHVVFGEVLNGKSVVRQIENLTTQSGDRPAKEALIVDCGELTGDAALAADVKQPDALGDPYEDFPEDCTDTLDAVAVLKIAKASKDYGNTAFKSGNYSLGLDKYQKGLRYINEEPELEDQPQSIKDELEALRFSLNNNSALLNIKLEAWDDAARSASAALEVGGVKDADRAKAFYRRGLANIHLKDEEAAVRDLTEANKLAPNDSAITRELNGVKTKAAARAAKEKAAYKKFFT.

A PPIase cyclophilin-type domain is found at 14 to 178 (YFDISIGGKS…KEALIVDCGE (165 aa)). TPR repeat units lie at residues 219 to 252 (AKASKDYGNTAFKSGNYSLGLDKYQKGLRYINEE), 271 to 304 (FSLNNNSALLNIKLEAWDDAARSASAALEVGGVK), and 309 to 342 (AKAFYRRGLANIHLKDEEAAVRDLTEANKLAPND).

Belongs to the cyclophilin-type PPIase family. PPIase D subfamily.

Its subcellular location is the cytoplasm. The catalysed reaction is [protein]-peptidylproline (omega=180) = [protein]-peptidylproline (omega=0). In terms of biological role, PPIases accelerate the folding of proteins. It catalyzes the cis-trans isomerization of proline imidic peptide bonds in oligopeptides. This Gibberella zeae (strain ATCC MYA-4620 / CBS 123657 / FGSC 9075 / NRRL 31084 / PH-1) (Wheat head blight fungus) protein is Peptidyl-prolyl cis-trans isomerase D (CPR6).